The following is a 141-amino-acid chain: Large ribosomal subunit protein uL11 (141 aa).

Belongs to the universal ribosomal protein uL11 family. Part of the ribosomal stalk of the 50S ribosomal subunit. Interacts with L10 and the large rRNA to form the base of the stalk. L10 forms an elongated spine to which L12 dimers bind in a sequential fashion forming a multimeric L10(L12)X complex. Post-translationally, one or more lysine residues are methylated.

Functionally, forms part of the ribosomal stalk which helps the ribosome interact with GTP-bound translation factors. This chain is Large ribosomal subunit protein uL11, found in Nitratiruptor sp. (strain SB155-2).